The chain runs to 202 residues: Putative 3-methyladenine DNA glycosylase (202 aa).

This sequence belongs to the DNA glycosylase MPG family.

The sequence is that of Putative 3-methyladenine DNA glycosylase from Clostridioides difficile (strain 630) (Peptoclostridium difficile).